Consider the following 656-residue polypeptide: CoB--CoM heterodisulfide reductase iron-sulfur subunit A 2 (656 aa).

152–175 lines the FAD pocket; it reads GGGVSGIQAALDLADMGFEVILVE. 4 consecutive 4Fe-4S ferredoxin-type domains span residues 238–269, 286–315, 577–606, and 610–639; these read KKPRYVDEDACTGCGACAEVCPIEVPNEFDEG, SVFTIDEEHCIRCGLCEEVCDADAIDFDQE, IVSEVDEEICGGCGTCVELCPYGAIELVEK, and LVAEVTAALCKGCGTCAAACPSGAMEQNHF. Cysteine 248, cysteine 251, cysteine 254, cysteine 258, cysteine 295, cysteine 298, cysteine 301, cysteine 305, cysteine 586, cysteine 589, cysteine 592, cysteine 596, cysteine 619, cysteine 622, cysteine 625, and cysteine 629 together coordinate [4Fe-4S] cluster.

This sequence belongs to the HdrA family. The ferredoxin:CoB-CoM heterodisulfide reductase is composed of three subunits; HdrA, HdrB and HdrC. Requires [4Fe-4S] cluster as cofactor. The cofactor is FAD.

The protein operates within cofactor metabolism; coenzyme M-coenzyme B heterodisulfide reduction; coenzyme B and coenzyme M from coenzyme M-coenzyme B heterodisulfide: step 1/1. Part of a complex that catalyzes the reversible reduction of CoM-S-S-CoB to the thiol-coenzymes H-S-CoM (coenzyme M) and H-S-CoB (coenzyme B). The chain is CoB--CoM heterodisulfide reductase iron-sulfur subunit A 2 (hdrA2) from Methanopyrus kandleri (strain AV19 / DSM 6324 / JCM 9639 / NBRC 100938).